The following is a 1403-amino-acid chain: Sushi, nidogen and EGF-like domain-containing protein 1 (1403 aa).

The N-terminal stretch at 1-24 (MRRGAAWALLLAAALGLGARGVRA) is a signal peptide. One can recognise an NIDO domain in the interval 103–258 (AFWADVDNRR…GRWAFRIDDA (156 aa)). 3 consecutive EGF-like domains span residues 268-309 (TTSV…RRCH), 311-347 (DVNE…PTCE), and 349-385 (AQSP…ATCE). 18 disulfides stabilise this stretch: C272–C284, C278–C297, C299–C308, C315–C326, C320–C335, C337–C346, C353–C364, C358–C373, C375–C384, C391–C402, C396–C411, C413–C422, C433–C444, C438–C453, C455–C464, C472–C480, C474–C488, and C490–C499. A glycan (N-linked (GlcNAc...) asparagine) is linked at N292. Positions 387–423 (DVDECSSDPCLNGGSCVDLVGNYSCICVEPFEGPQCE) constitute an EGF-like 4; calcium-binding domain. The N-linked (GlcNAc...) asparagine glycan is linked to N408. EGF-like domains follow at residues 429–465 (VPSP…LDCR) and 468–500 (ILND…LLCE). N484 carries an N-linked (GlcNAc...) asparagine glycan. N-linked (GlcNAc...) asparagine glycosylation occurs at N536. 4 consecutive EGF-like domains span residues 541 to 577 (LPSP…RHCE), 580 to 616 (RPHL…RHCE), 619 to 655 (KPDS…RHCE), and 657 to 693 (APSP…HRCQ). Cystine bridges form between C545/C556, C550/C565, C567/C576, C584/C595, C589/C604, C606/C615, C623/C634, C628/C643, C645/C654, C661/C672, C666/C681, C683/C692, C698/C739, C724/C751, C757/C768, C762/C777, C779/C788, C795/C806, C800/C815, C817/C826, C833/C844, C838/C853, C855/C864, C871/C882, C876/C891, and C893/C902. The Sushi domain maps to 696–753 (VDCGQPEEVKHATMRLNGTRMGSVALYTCDPGFSLSVLSHMRVCQPQGVWSQPPQCIE). N712 carries an N-linked (GlcNAc...) asparagine glycan. The EGF-like 11; calcium-binding domain occupies 753 to 789 (EVDECQSQPCLHKGSCQDLIAGYQCLCSPGYEGVHCE). The 37-residue stretch at 791–827 (ETDECQAQPCRNGGSCRDLPGAFICQCPEGFVGTHCE) folds into the EGF-like 12; calcium-binding domain. EGF-like domains lie at 829–865 (EVDA…YNCE) and 867–903 (VSDP…KDCT). The N-linked (GlcNAc...) asparagine glycan is linked to N886. 3 Fibronectin type-III domains span residues 908 to 1006 (PPTA…TRPR), 1007 to 1105 (PIED…TRPL), and 1106 to 1200 (PPAN…SPRD). N-linked (GlcNAc...) asparagine glycans are attached at residues N977, N1015, N1109, N1139, and N1298. Positions 1295 to 1314 (LPKNNSKDTESTPGSCSEDT) are disordered. Over residues 1305 to 1314 (STPGSCSEDT) the composition is skewed to polar residues. The 37-residue stretch at 1306 to 1342 (TPGSCSEDTCQNGGTCVPGANAHSCDCRPGFKGRHCE) folds into the EGF-like 15 domain. Cystine bridges form between C1310–C1321, C1315–C1330, and C1332–C1341.

Post-translationally, phosphorylated on serine and threonine residues. N-glycosylated. In terms of tissue distribution, expressed in liver.

The protein localises to the secreted. The protein resides in the extracellular space. It localises to the extracellular matrix. This Rattus norvegicus (Rat) protein is Sushi, nidogen and EGF-like domain-containing protein 1.